We begin with the raw amino-acid sequence, 120 residues long: MARVKRGVVARARHKKVLKLANGYYGARSRVYRVAFQAVLKAGQYCYRDRRCKKRQFRKLWITRINAAVRQHGITYSCFMNSLKKASIHIDRKILAEIAISDKVAFATLAEKAKSILCVT.

The protein belongs to the bacterial ribosomal protein bL20 family.

In terms of biological role, binds directly to 23S ribosomal RNA and is necessary for the in vitro assembly process of the 50S ribosomal subunit. It is not involved in the protein synthesizing functions of that subunit. The polypeptide is Large ribosomal subunit protein bL20 (Baumannia cicadellinicola subsp. Homalodisca coagulata).